Consider the following 412-residue polypeptide: Subtilisin-like protease 6 (412 aa).

The N-terminal stretch at 1 to 20 (MGFITKAIPIVLAALSTVNG) is a signal peptide. Positions 21 to 127 (ARILEAGPHA…VRTTTNGTNL (107 aa)) are excised as a propeptide. In terms of domain architecture, Inhibitor I9 spans 36–120 (KYIVVMKKDV…FIEPDFVVRT (85 aa)). Positions 135-412 (SWGLARVGSK…SKLIYNGSGK (278 aa)) constitute a Peptidase S8 domain. Catalysis depends on charge relay system residues D167 and H198. 2 N-linked (GlcNAc...) asparagine glycosylation sites follow: N252 and N264. S358 functions as the Charge relay system in the catalytic mechanism. A glycan (N-linked (GlcNAc...) asparagine) is linked at N408.

It belongs to the peptidase S8 family.

It localises to the secreted. In terms of biological role, secreted subtilisin-like serine protease with keratinolytic activity that contributes to pathogenicity. The polypeptide is Subtilisin-like protease 6 (SUB6) (Arthroderma benhamiae (strain ATCC MYA-4681 / CBS 112371) (Trichophyton mentagrophytes)).